Consider the following 199-residue polypeptide: Protein-L-isoaspartate O-methyltransferase (199 aa).

Residue serine 51 is part of the active site.

The protein belongs to the methyltransferase superfamily. L-isoaspartyl/D-aspartyl protein methyltransferase family.

The protein resides in the cytoplasm. The catalysed reaction is [protein]-L-isoaspartate + S-adenosyl-L-methionine = [protein]-L-isoaspartate alpha-methyl ester + S-adenosyl-L-homocysteine. Catalyzes the methyl esterification of L-isoaspartyl residues in peptides and proteins that result from spontaneous decomposition of normal L-aspartyl and L-asparaginyl residues. It plays a role in the repair and/or degradation of damaged proteins. The chain is Protein-L-isoaspartate O-methyltransferase from Fervidobacterium nodosum (strain ATCC 35602 / DSM 5306 / Rt17-B1).